Reading from the N-terminus, the 755-residue chain is Polyribonucleotide nucleotidyltransferase (755 aa).

Residues Asp482 and Asp488 each coordinate Mg(2+). Residues 549–608 enclose the KH domain; sequence PRMVSFYIDKDKISAAIGAKGKNIRSVCERSNAKIEIGDDGKVSVFAMSSAEAEIAKNMM. The 69-residue stretch at 618 to 686 folds into the S1 motif domain; the sequence is GAIVDVKVVK…KGGCPKLSRR (69 aa). The segment covering 702–714 has biased composition (basic and acidic residues); the sequence is NEEKKDSSNDRDY. Residues 702–755 are disordered; the sequence is NEEKKDSSNDRDYYNSPFNRKSGHRKRPVHSRSSFSNRNNRPKFGNDDSSSSFY. Positions 722–731 are enriched in basic residues; sequence KSGHRKRPVH.

This sequence belongs to the polyribonucleotide nucleotidyltransferase family. Mg(2+) serves as cofactor.

It is found in the cytoplasm. It catalyses the reaction RNA(n+1) + phosphate = RNA(n) + a ribonucleoside 5'-diphosphate. In terms of biological role, involved in mRNA degradation. Catalyzes the phosphorolysis of single-stranded polyribonucleotides processively in the 3'- to 5'-direction. The polypeptide is Polyribonucleotide nucleotidyltransferase (Wolbachia sp. subsp. Brugia malayi (strain TRS)).